The primary structure comprises 502 residues: MLAAMGSLAAALWAVVHPRTLLLGTVAFLLAADFLKRRRPKNYPPGPWRLPFLGNFFLVDFEQSHLEVQLFVKKYGNLFSLELGDISAVLITGLPLIKEALIHMDQNFGNRPVTPMREHIFKKNGLIMSSGQAWKEQRRFTLTALRNFGLGKKSLEERIQEEAQHLTEAIKEENGQPFDPHFKINNAVSNIICSITFGERFEYQDSWFQQLLKLLDEVTYLEASKTCQLYNVFPWIMKFLPGPHQTLFSNWKKLKLFVSHMIDKHRKDWNPAETRDFIDAYLKEMSKHTGNPTSSFHEENLICSTLDLFFAGTETTSTTLRWALLYMALYPEIQEKVQAEIDRVIGQGQQPSTAARESMPYTNAVIHEVQRMGNIIPLNVPREVTVDTTLAGYHLPKGTMILTNLTALHRDPTEWATPDTFNPDHFLENGQFKKREAFMPFSIGKRACLGEQLARTELFIFFTSLMQKFTFRPPNNEKLSLKFRMGITISPVSHRLCAVPQV.

Cysteine 448 contacts heme.

This sequence belongs to the cytochrome P450 family. Heme is required as a cofactor. Highly expressed in heart, present at lower levels in liver, kidney and skeletal muscle (at protein level).

It is found in the endoplasmic reticulum membrane. The protein localises to the microsome membrane. It catalyses the reaction (5Z,8Z,11Z,14Z)-eicosatetraenoate + reduced [NADPH--hemoprotein reductase] + O2 = 5,6-epoxy-(8Z,11Z,14Z)-eicosatrienoate + oxidized [NADPH--hemoprotein reductase] + H2O + H(+). The enzyme catalyses (5Z,8Z,11Z,14Z)-eicosatetraenoate + reduced [NADPH--hemoprotein reductase] + O2 = (8R,9S)-epoxy-(5Z,11Z,14Z)-eicosatrienoate + oxidized [NADPH--hemoprotein reductase] + H2O + H(+). It carries out the reaction (5Z,8Z,11Z,14Z)-eicosatetraenoate + reduced [NADPH--hemoprotein reductase] + O2 = (8S,9R)-epoxy-(5Z,11Z,14Z)-eicosatrienoate + oxidized [NADPH--hemoprotein reductase] + H2O + H(+). The catalysed reaction is (5Z,8Z,11Z,14Z)-eicosatetraenoate + reduced [NADPH--hemoprotein reductase] + O2 = (11R,12S)-epoxy-(5Z,8Z,14Z)-eicosatrienoate + oxidized [NADPH--hemoprotein reductase] + H2O + H(+). It catalyses the reaction (5Z,8Z,11Z,14Z)-eicosatetraenoate + reduced [NADPH--hemoprotein reductase] + O2 = (11S,12R)-epoxy-(5Z,8Z,14Z)-eicosatrienoate + oxidized [NADPH--hemoprotein reductase] + H2O + H(+). The enzyme catalyses (5Z,8Z,11Z,14Z)-eicosatetraenoate + reduced [NADPH--hemoprotein reductase] + O2 = (14R,15S)-epoxy-(5Z,8Z,11Z)-eicosatrienoate + oxidized [NADPH--hemoprotein reductase] + H2O + H(+). It carries out the reaction (5Z,8Z,11Z,14Z)-eicosatetraenoate + reduced [NADPH--hemoprotein reductase] + O2 = (14S,15R)-epoxy-(5Z,8Z,11Z)-eicosatrienoate + oxidized [NADPH--hemoprotein reductase] + H2O + H(+). The catalysed reaction is (15S)-hydroperoxy-(5Z,8Z,11Z,13E)-eicosatetraenoate = (13S)-hydroxy-(14S,15S)-epoxy-(5Z,8Z,11Z)-eicosatrienoate. It catalyses the reaction (15S)-hydroperoxy-(5Z,8Z,11Z,13E)-eicosatetraenoate = (13R)-hydroxy-(14S,15S)-epoxy-(5Z,8Z,11Z)-eicosatrienoate. The enzyme catalyses (5Z,8Z,11Z,14Z,17Z)-eicosapentaenoate + reduced [NADPH--hemoprotein reductase] + O2 = (17R,18S)-epoxy-(5Z,8Z,11Z,14Z)-eicosatetraenoate + oxidized [NADPH--hemoprotein reductase] + H2O + H(+). It carries out the reaction (5Z,8Z,11Z,14Z,17Z)-eicosapentaenoate + reduced [NADPH--hemoprotein reductase] + O2 = (17S,18R)-epoxy-(5Z,8Z,11Z,14Z)-eicosatetraenoate + oxidized [NADPH--hemoprotein reductase] + H2O + H(+). The catalysed reaction is (4Z,7Z,10Z,13Z,16Z,19Z)-docosahexaenoate + reduced [NADPH--hemoprotein reductase] + O2 = (19R,20S)-epoxy-(4Z,7Z,10Z,13Z,16Z)-docosapentaenoate + oxidized [NADPH--hemoprotein reductase] + H2O + H(+). It catalyses the reaction (4Z,7Z,10Z,13Z,16Z,19Z)-docosahexaenoate + reduced [NADPH--hemoprotein reductase] + O2 = (19S,20R)-epoxy-(4Z,7Z,10Z,13Z,16Z)-docosapentaenoate + oxidized [NADPH--hemoprotein reductase] + H2O + H(+). The enzyme catalyses albendazole + reduced [NADPH--hemoprotein reductase] + O2 = hydroxyalbendazole + oxidized [NADPH--hemoprotein reductase] + H2O + H(+). It carries out the reaction albendazole + reduced [NADPH--hemoprotein reductase] + O2 = albendazole S-oxide + oxidized [NADPH--hemoprotein reductase] + H2O + H(+). The catalysed reaction is fenbendazole + reduced [NADPH--hemoprotein reductase] + O2 = fenbendazole S-oxide + oxidized [NADPH--hemoprotein reductase] + H2O + H(+). It participates in lipid metabolism; arachidonate metabolism. Functionally, a cytochrome P450 monooxygenase involved in the metabolism of polyunsaturated fatty acids (PUFA) in the cardiovascular system. Mechanistically, uses molecular oxygen inserting one oxygen atom into a substrate, and reducing the second into a water molecule, with two electrons provided by NADPH via cytochrome P450 reductase (NADPH--hemoprotein reductase). Catalyzes the epoxidation of double bonds of PUFA. Converts arachidonic acid to four regioisomeric epoxyeicosatrienoic acids (EpETrE), likely playing a major role in the epoxidation of endogenous cardiac arachidonic acid pools. In endothelial cells, participates in eicosanoids metabolism by converting hydroperoxide species into hydroxy epoxy metabolites. In combination with 15-lipoxygenase metabolizes arachidonic acid and converts hydroperoxyicosatetraenoates (HpETEs) into hydroxy epoxy eicosatrienoates (HEETs), which are precursors of vasodilatory trihydroxyicosatrienoic acids (THETAs). This hydroperoxide isomerase activity is NADPH- and O2-independent. Catalyzes the monooxygenation of a various xenobiotics, such as danazol, amiodarone, terfenadine, astemizole, thioridazine, tamoxifen, cyclosporin A and nabumetone. Catalyzes hydroxylation of the anthelmintics albendazole and fenbendazole. Catalyzes the sulfoxidation of fenbedazole. In Homo sapiens (Human), this protein is Cytochrome P450 2J2.